The primary structure comprises 971 residues: Translation initiation factor IF-2 (971 aa).

Positions 49 to 63 are enriched in basic and acidic residues; it reads HLRKSHGATDGDKRK. Disordered regions lie at residues 49–86 and 101–385; these read HLRKSHGATDGDKRKITLTRKHTSEIKQSDATGKARTI and DVAE…APTE. Residues 105–114 are compositionally biased toward low complexity; that stretch reads GAEQGQAQVA. The span at 121–177 shows a compositional bias: basic and acidic residues; it reads ELKRREEEARREAELLEKQAQELRERQERLEREEAERRAREEAAEAQRRRAEEEAAA. The segment covering 178–209 has biased composition (low complexity); that stretch reads KRAAAAAVEAQQVAAQQAAEAQQETAGAQSAQ. Over residues 210–261 the composition is skewed to basic and acidic residues; that stretch reads DEARAAAERAAQREAAKKAEDAAREAADKTRAEQEEIRKRREAAEAEARAIR. Residues 277-286 show a composition bias toward pro residues; the sequence is PPKPVEPPKP. Positions 298–325 are enriched in low complexity; the sequence is KPAGASAARPAVKKPAGAAPATTAPAGA. Residues 355–368 show a composition bias toward gly residues; that stretch reads SSGGVDRGWRGGPK. The tr-type G domain occupies 471-640; the sequence is PRPPVVTVMG…LLQAEVLELK (170 aa). The segment at 480–487 is G1; it reads GHVDHGKT. GTP is bound at residue 480-487; sequence GHVDHGKT. Residues 505–509 form a G2 region; the sequence is GITQH. The tract at residues 526 to 529 is G3; the sequence is DTPG. GTP-binding positions include 526–530 and 580–583; these read DTPGH and NKID. The tract at residues 580–583 is G4; it reads NKID. The segment at 616–618 is G5; that stretch reads SAK.

It belongs to the TRAFAC class translation factor GTPase superfamily. Classic translation factor GTPase family. IF-2 subfamily.

It is found in the cytoplasm. One of the essential components for the initiation of protein synthesis. Protects formylmethionyl-tRNA from spontaneous hydrolysis and promotes its binding to the 30S ribosomal subunits. Also involved in the hydrolysis of GTP during the formation of the 70S ribosomal complex. The sequence is that of Translation initiation factor IF-2 from Burkholderia ambifaria (strain ATCC BAA-244 / DSM 16087 / CCUG 44356 / LMG 19182 / AMMD) (Burkholderia cepacia (strain AMMD)).